A 143-amino-acid polypeptide reads, in one-letter code: Ponticulin (143 aa).

The signal sequence occupies residues 1–22 (MLVLRNLLALVTLALLFTLSSA). A glycan (N-linked (GlcNAc...) asparagine) is linked at N111. The GPI-like-anchor amidated serine moiety is linked to residue S118. A propeptide spans 119 to 143 (SSGSTVMIGLASSLLFAFATLLALF) (removed in mature form).

It belongs to the ponticulin family. Monomer. Post-translationally, disulfide bond(s) stabilize the native, actin-binding conformation of ponticulin. The GPI-like-anchor contains a phosphoceramide group, rather than a phosphatidyl group.

The protein localises to the cell membrane. Its function is as follows. Binds F-actin and nucleates actin assembly. Major high affinity link between the plasma membrane and the cortical actin network. This is Ponticulin (ponA) from Dictyostelium discoideum (Social amoeba).